Reading from the N-terminus, the 467-residue chain is Stromal membrane-associated protein 1 (467 aa).

The Arf-GAP domain maps to 18–136 (QLILSKLLRE…KYYDKNAIAI (119 aa)). Residues 33–56 (CADCEAKGPRWASWNIGVFICIRC) form a C4-type zinc finger. Over residues 145–155 (PLQPLVSSPSL) the composition is skewed to polar residues. Disordered regions lie at residues 145-224 (PLQP…LDGP) and 408-467 (KFGL…QLWK). Basic and acidic residues-rich tracts occupy residues 160–185 (DKNKLEKEKEKKKEEKKREKEPEKPA) and 192–204 (KLQKKDQQLEPKK). The Interaction with clathrin heavy chains motif lies at 218–222 (LLGLD). Residues 413–438 (QAQQPQWSLSQMNQQMAGMSISSATP) show a composition bias toward polar residues. A compositionally biased stretch (low complexity) spans 446 to 467 (SSTTAGWSGSSSGQTLSTQLWK).

Interacts with ARF6. Interacts with clathrin heavy chains via the clathrin box-like motif. Detected in bone marrow, adrenal gland, trachea, lymph node, spinal cord, peripheral blood leukocytes, thyroid and stomach.

It localises to the cell membrane. Functionally, GTPase activating protein that acts on ARF6. Plays a role in clathrin-dependent endocytosis. May play a role in erythropoiesis. This Homo sapiens (Human) protein is Stromal membrane-associated protein 1 (SMAP1).